A 173-amino-acid polypeptide reads, in one-letter code: CKLF-like MARVEL transmembrane domain-containing protein 8 (173 aa).

An MARVEL domain is found at F36 to R168. A run of 4 helical transmembrane segments spans residues L40 to A60, F70 to I90, T105 to V125, and F147 to W167.

The protein belongs to the chemokine-like factor family. In terms of tissue distribution, highly expressed in liver and pancreas.

It is found in the membrane. The protein resides in the cytoplasm. Its subcellular location is the nucleus. The chain is CKLF-like MARVEL transmembrane domain-containing protein 8 (CMTM8) from Homo sapiens (Human).